A 956-amino-acid polypeptide reads, in one-letter code: Outer capsid protein VP2 (956 aa).

This sequence belongs to the orbivirus VP2 family.

The protein localises to the virion. Functionally, the VP2 protein is one of the two proteins (with VP5) which constitute the virus particle outer capsid. It is the major target of the host immunogenic response. Responsible for viral attachment to target host cell, probably by binding to sialic acid. This attachment induces virion internalization predominantly through clathrin-dependent endocytosis. The chain is Outer capsid protein VP2 (Segment-2) from Bluetongue virus 11 (isolate USA) (BTV 11).